Reading from the N-terminus, the 416-residue chain is Probable protein phosphatase 2C 49 (416 aa).

Residues 91-411 (RYGVTSVFGR…DNVSVVVVDL (321 aa)) form the PPM-type phosphatase domain. Aspartate 131, glycine 132, and aspartate 319 together coordinate Mn(2+). A compositionally biased stretch (pro residues) spans 343–360 (PPSPPGCSRPKAVLPPPA). The tract at residues 343–368 (PPSPPGCSRPKAVLPPPAGASGGGGG) is disordered. Aspartate 402 is a Mn(2+) binding site.

It belongs to the PP2C family. Mg(2+) is required as a cofactor. The cofactor is Mn(2+).

It catalyses the reaction O-phospho-L-seryl-[protein] + H2O = L-seryl-[protein] + phosphate. The catalysed reaction is O-phospho-L-threonyl-[protein] + H2O = L-threonyl-[protein] + phosphate. This chain is Probable protein phosphatase 2C 49, found in Oryza sativa subsp. japonica (Rice).